The chain runs to 702 residues: Acetylcholinesterase (702 aa).

The first 36 residues, 1-36 (MEIRGLITRLLGPCHLRHLILCSLGLYSILVQSVHC), serve as a signal peptide directing secretion. The tract at residues 107 to 134 (HIHSTTTRRRGLTRRESSSDATDSDPLV) is disordered. N-linked (GlcNAc...) asparagine glycosylation occurs at asparagine 187. Cysteine 195 and cysteine 222 are oxidised to a cystine. Catalysis depends on serine 327, which acts as the Acyl-ester intermediate. A disulfide bridge connects residues cysteine 381 and cysteine 394. Residues glutamate 453 and histidine 567 each act as charge relay system in the active site. A disulfide bridge connects residues cysteine 529 and cysteine 650. N-linked (GlcNAc...) asparagine glycosylation is present at asparagine 637.

The protein belongs to the type-B carboxylesterase/lipase family.

The protein resides in the synapse. The protein localises to the secreted. Its subcellular location is the cell membrane. It catalyses the reaction acetylcholine + H2O = choline + acetate + H(+). In terms of biological role, rapidly hydrolyzes choline released into the synapse. The polypeptide is Acetylcholinesterase (ACHE1) (Culex pipiens (House mosquito)).